The sequence spans 184 residues: MMSQPAKVLLLYAHPESQDSVANRVLLKPATQLSNVTVHDLYAHYPDFFIDIPREQALLREHEVIVFQHPLYTYSCPALLKEWLDRVLSRGFASGPGGNQLAGKYWRSVITTGEPESAYRYDALNRYPMSDVLRPFELAAGMCRMHWLSPIIIYWARRQSAQELASHARAYGDWLANPLSPGGR.

This sequence belongs to the NAD(P)H dehydrogenase (quinone) family. KefG subfamily. In terms of assembly, interacts with KefB.

It is found in the cell inner membrane. It carries out the reaction a quinone + NADH + H(+) = a quinol + NAD(+). The enzyme catalyses a quinone + NADPH + H(+) = a quinol + NADP(+). Functionally, regulatory subunit of a potassium efflux system that confers protection against electrophiles. Required for full activity of KefB. The protein is Glutathione-regulated potassium-efflux system ancillary protein KefG of Escherichia coli O8 (strain IAI1).